A 250-amino-acid polypeptide reads, in one-letter code: NADH-quinone oxidoreductase subunit C (250 aa).

The protein belongs to the complex I 30 kDa subunit family. As to quaternary structure, NDH-1 is composed of 14 different subunits. Subunits NuoB, C, D, E, F, and G constitute the peripheral sector of the complex.

Its subcellular location is the cell inner membrane. It catalyses the reaction a quinone + NADH + 5 H(+)(in) = a quinol + NAD(+) + 4 H(+)(out). Functionally, NDH-1 shuttles electrons from NADH, via FMN and iron-sulfur (Fe-S) centers, to quinones in the respiratory chain. The immediate electron acceptor for the enzyme in this species is believed to be ubiquinone. Couples the redox reaction to proton translocation (for every two electrons transferred, four hydrogen ions are translocated across the cytoplasmic membrane), and thus conserves the redox energy in a proton gradient. This is NADH-quinone oxidoreductase subunit C from Xanthomonas euvesicatoria pv. vesicatoria (strain 85-10) (Xanthomonas campestris pv. vesicatoria).